A 346-amino-acid polypeptide reads, in one-letter code: Lipase chaperone (346 aa).

The chain crosses the membrane as a helical span at residues 10-30 (TIVFGVITSVLLLLLLIYYVF).

Belongs to the lipase chaperone family.

The protein resides in the cell inner membrane. Functionally, may be involved in the folding of the extracellular lipase during its passage through the periplasm. The protein is Lipase chaperone (lifO) of Acinetobacter venetianus (strain ATCC 31012 / DSM 23050 / BCRC 14357 / CCUG 45561 / CIP 110063 / KCTC 2702 / LMG 19082 / RAG-1).